Here is a 100-residue protein sequence, read N- to C-terminus: Protein SAMBA (100 aa).

The interval 1 to 40 is disordered; the sequence is MNGASPAHSLVSTTAVAGGGGSSGAAAGLDDFHFPPDIPS.

In terms of assembly, interacts with CDC27B and CYCA2-3. As to expression, expressed in embryos, germinating seeds, hypocotyls and pollen grains.

Its function is as follows. Plays an important role in organ size control. Acts as negative regulator of the anaphase-promoting complex/cyclosome (APC/C). Regulates cell proliferation during early development by targeting CYCA2-3 for APC/C-mediated degradation. Required for mitosis I during pollen microspore development. The chain is Protein SAMBA from Arabidopsis thaliana (Mouse-ear cress).